Here is a 117-residue protein sequence, read N- to C-terminus: MDMRVPAQRLGLLLLWFPGARCAIRMTQSPFSLSASVGDRVTITCWASQGISSYLAWYQQKPAKAPKLFIYYASSLQSGVPSRFSGSGSGTDYTLTISSLQPEDFATYYCQQYYSTP.

The signal sequence occupies residues 1–22; it reads MDMRVPAQRLGLLLLWFPGARC. Positions 23-45 are framework-1; the sequence is AIRMTQSPFSLSASVGDRVTITC. One can recognise an Ig-like domain in the interval 23 to 117; that stretch reads AIRMTQSPFS…YYCQQYYSTP (95 aa). Cysteines 45 and 110 form a disulfide. Residues 46–56 form a complementarity-determining-1 region; that stretch reads WASQGISSYLA. Positions 57 to 71 are framework-2; that stretch reads WYQQKPAKAPKLFIY. Residues 72-78 are complementarity-determining-2; sequence YASSLQS. The tract at residues 79-110 is framework-3; sequence GVPSRFSGSGSGTDYTLTISSLQPEDFATYYC. The segment at 111 to 117 is complementarity-determining-3; that stretch reads QQYYSTP.

As to quaternary structure, immunoglobulins are composed of two identical heavy chains and two identical light chains; disulfide-linked.

The protein localises to the secreted. Its subcellular location is the cell membrane. V region of the variable domain of immunoglobulin light chains that participates in the antigen recognition. Immunoglobulins, also known as antibodies, are membrane-bound or secreted glycoproteins produced by B lymphocytes. In the recognition phase of humoral immunity, the membrane-bound immunoglobulins serve as receptors which, upon binding of a specific antigen, trigger the clonal expansion and differentiation of B lymphocytes into immunoglobulins-secreting plasma cells. Secreted immunoglobulins mediate the effector phase of humoral immunity, which results in the elimination of bound antigens. The antigen binding site is formed by the variable domain of one heavy chain, together with that of its associated light chain. Thus, each immunoglobulin has two antigen binding sites with remarkable affinity for a particular antigen. The variable domains are assembled by a process called V-(D)-J rearrangement and can then be subjected to somatic hypermutations which, after exposure to antigen and selection, allow affinity maturation for a particular antigen. In Homo sapiens (Human), this protein is Immunoglobulin kappa variable 1D-43.